A 299-amino-acid chain; its full sequence is Endonuclease G, mitochondrial (299 aa).

The N-terminal 48 residues, 1-48 (MQLLRAGLTLALGAGLGAAAESWWRQRADARATPGLLSRLPVLPVAAA), are a transit peptide targeting the mitochondrion. Phosphothreonine is present on T130. The active-site Proton acceptor is the H143. Residue N174 coordinates Mg(2+). The tract at residues 288 to 298 (AGSLKAITAGS) is essential for deoxyribonuclease activity. At S290 the chain carries Phosphoserine.

The protein belongs to the DNA/RNA non-specific endonuclease family. As to quaternary structure, homodimer; disulfide-linked. Homodimerization is essential for its activity. Interacts with YWHAG. It depends on Mg(2+) as a cofactor. GSK3-beta-mediated dual phosphorylations at Thr-130 and Ser-290 is necessary for its interaction with YWHAG and the induction of autophagy.

It localises to the mitochondrion. In terms of biological role, endonuclease that preferentially catalyzes the cleavage of double-stranded 5-hydroxymethylcytosine (5hmC)-modified DNA. The 5hmC-modified nucleotide does not increase the binding affinity, but instead increases the efficiency of cutting and specifies the site of cleavage for the modified DNAs. Shows significantly higher affinity for four- stranded Holliday junction over duplex and single-stranded DNAs. Promotes conservative recombination when the DNA is 5hmC-modified. Promotes autophagy through the suppression of mTOR by its phosphorylation-mediated interaction with YWHAG and its endonuclease activity-mediated DNA damage response. GSK3-beta mediated phosphorylation of ENDOG enhances its interaction with YWHAG, leading to the release of TSC2 and PIK3C3 from YWHAG resulting in mTOR pathway suppression and autophagy initiation. Promotes cleavage of mtDNA in response to oxidative and nitrosative stress, in turn inducing compensatory mtDNA replication. The polypeptide is Endonuclease G, mitochondrial (ENDOG) (Bos taurus (Bovine)).